Consider the following 141-residue polypeptide: Putative pre-16S rRNA nuclease (141 aa).

It belongs to the YqgF nuclease family.

The protein localises to the cytoplasm. Its function is as follows. Could be a nuclease involved in processing of the 5'-end of pre-16S rRNA. In Aliivibrio fischeri (strain ATCC 700601 / ES114) (Vibrio fischeri), this protein is Putative pre-16S rRNA nuclease.